Reading from the N-terminus, the 244-residue chain is HTH-type transcriptional regulator Cmr (244 aa).

41 to 160 (GSAPLHRDDV…RRWLSSVAQR (120 aa)) contacts a nucleoside 3',5'-cyclic phosphate. The HTH crp-type domain maps to 174–237 (RPLPAQVAQL…YAVIEITDQH (64 aa)). A DNA-binding region (H-T-H motif) is located at residues 197–216 (QRTLAAMLGAQRPSINKILK).

Its function is as follows. Positively regulates the expression of at least groEL2. This is HTH-type transcriptional regulator Cmr (cmr) from Mycobacterium tuberculosis (strain CDC 1551 / Oshkosh).